The following is a 1059-amino-acid chain: DNA-directed RNA polymerase subunit beta (1059 aa).

This sequence belongs to the RNA polymerase beta chain family. As to quaternary structure, in plastids the minimal PEP RNA polymerase catalytic core is composed of four subunits: alpha, beta, beta', and beta''. When a (nuclear-encoded) sigma factor is associated with the core the holoenzyme is formed, which can initiate transcription (Potential).

The protein localises to the plastid. The protein resides in the apicoplast. It carries out the reaction RNA(n) + a ribonucleoside 5'-triphosphate = RNA(n+1) + diphosphate. In terms of biological role, DNA-dependent RNA polymerase catalyzes the transcription of DNA into RNA using the four ribonucleoside triphosphates as substrates. In Eimeria tenella (Coccidian parasite), this protein is DNA-directed RNA polymerase subunit beta (rpoB).